A 192-amino-acid chain; its full sequence is UPF0301 protein Bcen_0382 (192 aa).

The protein belongs to the UPF0301 (AlgH) family.

This chain is UPF0301 protein Bcen_0382, found in Burkholderia orbicola (strain AU 1054).